We begin with the raw amino-acid sequence, 1450 residues long: ABC transporter G family member 37 (1450 aa).

The region spanning 158-431 is the ABC transporter 1 domain; that stretch reads GNALHILPNK…FEFMGFRCPA (274 aa). Position 191 to 198 (191 to 198) interacts with ATP; the sequence is GPPGSGKT. Residues 509 to 721 enclose the ABC transmembrane type-2 1 domain; the sequence is ELLKATIDRE…AQNAISTNEF (213 aa). Helical transmembrane passes span 527–547, 559–579, 614–634, 646–666, 670–690, and 756–776; these read FMYIFKAVNLTLMALIVMTTF, GMIYLGALYFALDTVMFNGFA, IPITFLEVGVYVFITYYVIGF, LLLLALNQMSSALFRFIAGIG, VVSHTFGPLSLLAFAALGGFI, and IGLGALLGYTLLFNLLYTVAL. In terms of domain architecture, ABC transporter 2 spans 852-1104; sequence ISFNDVRYSV…KLIEYFEGID (253 aa). 897–904 is a binding site for ATP; it reads GVSGAGKT. Positions 1177-1391 constitute an ABC transmembrane type-2 2 domain; sequence TQCLACLWKQ…TLYGLVASQF (215 aa). A run of 7 helical transmembrane segments spans residues 1198 to 1218, 1236 to 1256, 1284 to 1304, 1311 to 1331, 1341 to 1361, 1372 to 1392, and 1422 to 1442; these read AVRLLFTIVIALMFGTMFWNL, YAAVLYIGVQNSGSVQPVVVV, LPYIMVQTLIYGVLVYSMIGF, FLWYLFFMYFTLLYFTFYGMM, IAAIISSAFYNVWNLFSGYLI, WYCWICPVAWTLYGLVASQFG, and VVAVVHVVFAVTFAFLFSFAI.

This sequence belongs to the ABC transporter superfamily. ABCG family. PDR (TC 3.A.1.205) subfamily.

It localises to the membrane. Its function is as follows. May be a general defense protein. This Oryza sativa subsp. japonica (Rice) protein is ABC transporter G family member 37.